Here is a 938-residue protein sequence, read N- to C-terminus: Myocardin (938 aa).

Residues 12–27 (IRRKFRSVLQLRLQQR) carry the MEF2C-binding motif. RPEL repeat units follow at residues 18–43 (SVLQ…PPLK), 62–87 (DSLR…QAST), and 106–131 (DDLN…PMDS). Residues 37 to 64 (GLIPPLKSPTEFHDPRKKLDSAKTEDSL) form a disordered region. Basic and acidic residues predominate over residues 46–64 (TEFHDPRKKLDSAKTEDSL). Residues 153 to 205 (FEDDSSRDGLSPDQARSEDPQGSGGSTPDIKSTEAPLAGPLDTIQDLTPGSES) are HDAC5-binding. Disordered regions lie at residues 155 to 282 (DDSS…PPPM) and 339 to 381 (NEQM…PLPP). Residues 210–221 (TASQLSNQSDSG) show a composition bias toward polar residues. The segment covering 248-265 (NRHKKPKDPKPKVKKLKY) has biased composition (basic residues). Residues 345–360 (NPNSSSTPLNNTPLSP) show a composition bias toward low complexity. Residues 361–372 (VKNSLSGQTGVS) show a composition bias toward polar residues. The region spanning 383–417 (LDDLKVSELRQQLRIRGLPVSGTKTALVDRLRPFQ) is the SAP domain. S457, S461, S465, and S469 each carry phosphoserine; by GSK3-beta. Residues 501 to 521 (ESLLSSLNGGSGPSEPDGLDS) are disordered. Residues 522 to 566 (EKDKMLVEKQKVINQLTWKLRQEQRQVEELRMQLQKQKSGCNDQK) are a coiled coil. Residues 586 to 606 (AAQQASGKGQGHSSDSPPPAC) are disordered. Polar residues predominate over residues 588–600 (QQASGKGQGHSSD). A phosphoserine; by GSK3-beta mark is found at S627, S631, S635, and S639. Composition is skewed to polar residues over residues 667 to 694 (GAQR…QSSD) and 701 to 713 (SIPS…SSPT). Residues 667 to 734 (GAQRENHGVS…DAVKQQMTRS (68 aa)) form a disordered region. The segment at 717-938 (ITQPPSYEDA…SPMDLHLQQW (222 aa)) is required for interaction with and ubiquitination by STUB1. S815, S862, and S869 each carry phosphoserine; by MAPK1 and MAPK3. T896 is modified (phosphothreonine; by MAPK1 and MAPK3).

Homodimer. Interacts with MLLT7/FOXO4. Interacts with SRF, its association does not depend on specific DNA sequences for ternary complex formation. Interacts (via C-terminal) with EP300 (via the CREB-binding domain). Interacts with HDAC4 and HDAC5. Interacts with MEF2C. Interacts (via C-terminus) with STUB1/CHIP. Interacts with PURB. Post-translationally, ubiquitinated; by STUB1/CHIP at the C-terminus, leading to its degradation by the proteasome. Phosphorylation by GSK3B is required for STUB1/CHIP-mediated ubiquitination. Phosphorylation negatively regulates transcriptional activity. Phosphorylated; by GSK3B. As to expression, abundantly expressed in the heart, aorta media and bladder, weakly expressed in the stomach, intestine and lung.

It localises to the nucleus. In terms of biological role, smooth muscle cells (SM) and cardiac muscle cells-specific transcriptional factor which uses the canonical single or multiple CArG boxes DNA sequence. Acts as a cofactor of serum response factor (SRF) with the potential to modulate SRF-target genes. Plays a crucial role in cardiogenesis, urinary bladder development, and differentiation of the smooth muscle cell lineage (myogenesis). Positively regulates the transcription of genes involved in vascular smooth muscle contraction. In Rattus norvegicus (Rat), this protein is Myocardin (Myocd).